The primary structure comprises 230 residues: MAKDTPNGAATRGRFITFEGGEGAGKSTQIKLLAERLNAGRIRCVLTREPGGSPGAEIIRHMILSGIGSLIGGTEAETLLFAAARDDHVHTVIEPALAQGSWVLCDRFTDSTRAYQGQMGAVAPALLNAMQRVTIGDLKPDLTIILDVPVEIGVKRARLRRGAAEPDRFEAESLEFHRKLREAYRQIAADEPQRCVLIDANAKVKPVAAKVWAAVQKRLLYSKVSAVQHA.

20–27 (GGEGAGKS) serves as a coordination point for ATP.

Belongs to the thymidylate kinase family.

It carries out the reaction dTMP + ATP = dTDP + ADP. Its function is as follows. Phosphorylation of dTMP to form dTDP in both de novo and salvage pathways of dTTP synthesis. The protein is Thymidylate kinase of Rhodopseudomonas palustris (strain BisB18).